A 166-amino-acid chain; its full sequence is NAD(P)H-quinone oxidoreductase subunit I, chloroplastic (166 aa).

4Fe-4S ferredoxin-type domains are found at residues 55-84 (GRIH…VDWK) and 95-124 (LNYS…MTEE). [4Fe-4S] cluster-binding residues include Cys-64, Cys-67, Cys-70, Cys-74, Cys-104, Cys-107, Cys-110, and Cys-114.

Belongs to the complex I 23 kDa subunit family. As to quaternary structure, NDH is composed of at least 16 different subunits, 5 of which are encoded in the nucleus. Requires [4Fe-4S] cluster as cofactor.

It is found in the plastid. It localises to the chloroplast thylakoid membrane. It carries out the reaction a plastoquinone + NADH + (n+1) H(+)(in) = a plastoquinol + NAD(+) + n H(+)(out). The enzyme catalyses a plastoquinone + NADPH + (n+1) H(+)(in) = a plastoquinol + NADP(+) + n H(+)(out). NDH shuttles electrons from NAD(P)H:plastoquinone, via FMN and iron-sulfur (Fe-S) centers, to quinones in the photosynthetic chain and possibly in a chloroplast respiratory chain. The immediate electron acceptor for the enzyme in this species is believed to be plastoquinone. Couples the redox reaction to proton translocation, and thus conserves the redox energy in a proton gradient. The protein is NAD(P)H-quinone oxidoreductase subunit I, chloroplastic of Rensonia salvadorica.